Here is a 204-residue protein sequence, read N- to C-terminus: Glycerol-3-phosphate acyltransferase (204 aa).

The next 5 membrane-spanning stretches (helical) occupy residues 8–28 (ILIF…CYIF), 53–73 (VPAA…VVIA), 81–101 (FITA…IFFG), 116–136 (FGFS…VAII), and 155–175 (VIFT…IIIL).

This sequence belongs to the PlsY family. As to quaternary structure, probably interacts with PlsX.

The protein resides in the cell inner membrane. The catalysed reaction is an acyl phosphate + sn-glycerol 3-phosphate = a 1-acyl-sn-glycero-3-phosphate + phosphate. Its pathway is lipid metabolism; phospholipid metabolism. Catalyzes the transfer of an acyl group from acyl-phosphate (acyl-PO(4)) to glycerol-3-phosphate (G3P) to form lysophosphatidic acid (LPA). This enzyme utilizes acyl-phosphate as fatty acyl donor, but not acyl-CoA or acyl-ACP. The polypeptide is Glycerol-3-phosphate acyltransferase (Francisella tularensis subsp. tularensis (strain FSC 198)).